Here is a 288-residue protein sequence, read N- to C-terminus: Serine/threonine-protein phosphatase PGAM5, mitochondrial (288 aa).

Over 1-6 (MAFRQA) the chain is Mitochondrial matrix. The chain crosses the membrane as a helical span at residues 7–29 (LQLAACGLAGGSAAVLFSAVAVG). Residues 30–288 (KPRAGGDADT…FMPPDKITRS (259 aa)) lie on the Mitochondrial intermembrane side of the membrane. The interval 76-81 (NVEFGE) is interaction with KEAP1. A Phosphoserine modification is found at Ser86. Residues Lys115, Lys143, and Lys190 each carry the N6-acetyllysine modification.

This sequence belongs to the phosphoglycerate mutase family. BPG-dependent PGAM subfamily. Dimer. Forms a ternary complex with NFE2L2 and KEAP1. Interacts with BCL2L1 and MAP3K5. Upon TNF-induced necrosis, forms in complex with RIPK1, RIPK3 and MLKL; the formation of this complex leads to PGAM5 phosphorylation. Isoform 2, but not isoform 1, interacts with DNM1L; this interaction leads to DNM1L dephosphorylation and activation and eventually to mitochondria fragmentation. Phosphorylated by the RIPK1/RIPK3 complex under necrotic conditions. This phosphorylation increases PGAM5 phosphatase activity. Post-translationally, proteolytically cleaved by PARL in response to loss of mitochondrial membrane potential.

The protein resides in the mitochondrion outer membrane. It is found in the mitochondrion inner membrane. The enzyme catalyses O-phospho-L-seryl-[protein] + H2O = L-seryl-[protein] + phosphate. It catalyses the reaction O-phospho-L-threonyl-[protein] + H2O = L-threonyl-[protein] + phosphate. Functionally, mitochondrial serine/threonine phosphatase that dephosphorylates various substrates and thus plays a role in different biological processes including cellular senescence or mitophagy. Modulates cellular senescence by regulating mitochondrial dynamics. Mechanistically, participates in mitochondrial fission through dephosphorylating DNM1L/DRP1. Additionally, dephosphorylates MFN2 in a stress-sensitive manner and consequently protects it from ubiquitination and degradation to promote mitochondrial network formation. Regulates mitophagy independent of PARKIN by interacting with and dephosphorylating FUNDC1, which interacts with LC3. Regulates anti-oxidative response by forming a tertiary complex with KEAP1 and NRF2. Regulates necroptosis by acting as a RIPK3 target and recruiting the RIPK1-RIPK3-MLKL necrosis 'attack' complex to mitochondria. The sequence is that of Serine/threonine-protein phosphatase PGAM5, mitochondrial (Pgam5) from Rattus norvegicus (Rat).